Reading from the N-terminus, the 560-residue chain is Membrane protein insertase YidC (560 aa).

The next 6 helical transmembrane spans lie at 5-25, 334-354, 357-377, 431-451, 476-496, and 522-542; these read IINL…WQYF, AIDF…MNFF, YVGN…LLMF, LPIL…YVTI, LFGL…WPIL, and FMPL…LIYW.

Belongs to the OXA1/ALB3/YidC family. Type 1 subfamily. As to quaternary structure, interacts with the Sec translocase complex via SecD. Specifically interacts with transmembrane segments of nascent integral membrane proteins during membrane integration.

It localises to the cell inner membrane. Required for the insertion and/or proper folding and/or complex formation of integral membrane proteins into the membrane. Involved in integration of membrane proteins that insert both dependently and independently of the Sec translocase complex, as well as at least some lipoproteins. Aids folding of multispanning membrane proteins. The chain is Membrane protein insertase YidC from Rickettsia felis (strain ATCC VR-1525 / URRWXCal2) (Rickettsia azadi).